We begin with the raw amino-acid sequence, 508 residues long: Steroid 17-alpha-hydroxylase/17,20 lyase (508 aa).

Residue asparagine 202 coordinates substrate. Heme is bound at residue cysteine 442.

The protein belongs to the cytochrome P450 family. It depends on heme as a cofactor.

It localises to the endoplasmic reticulum membrane. Its subcellular location is the microsome membrane. The catalysed reaction is a C21-steroid + reduced [NADPH--hemoprotein reductase] + O2 = a 17alpha-hydroxy-C21-steroid + oxidized [NADPH--hemoprotein reductase] + H2O + H(+). It carries out the reaction progesterone + reduced [NADPH--hemoprotein reductase] + O2 = 17alpha-hydroxyprogesterone + oxidized [NADPH--hemoprotein reductase] + H2O + H(+). The enzyme catalyses pregnenolone + reduced [NADPH--hemoprotein reductase] + O2 = 17alpha-hydroxypregnenolone + oxidized [NADPH--hemoprotein reductase] + H2O + H(+). It catalyses the reaction 17alpha-hydroxyprogesterone + reduced [NADPH--hemoprotein reductase] + O2 = androst-4-ene-3,17-dione + acetate + oxidized [NADPH--hemoprotein reductase] + H2O + 2 H(+). The catalysed reaction is 17alpha-hydroxyprogesterone + reduced [NADPH--hemoprotein reductase] + O2 = 16alpha,17alpha-dihydroxyprogesterone + oxidized [NADPH--hemoprotein reductase] + H2O + H(+). It carries out the reaction 16alpha,17alpha-dihydroxyprogesterone + reduced [NADPH--hemoprotein reductase] + O2 = 6beta,16alpha,17alpha-trihydroxyprogesterone + oxidized [NADPH--hemoprotein reductase] + H2O + H(+). The enzyme catalyses 17alpha-hydroxypregnenolone + reduced [NADPH--hemoprotein reductase] + O2 = 3beta-hydroxyandrost-5-en-17-one + acetate + oxidized [NADPH--hemoprotein reductase] + H2O + 2 H(+). It catalyses the reaction 16alpha,17alpha-dihydroxypregnenolone + reduced [NADPH--hemoprotein reductase] + O2 = 3beta,16alpha-dihydroxy-androst-5-en-17-one + acetate + oxidized [NADPH--hemoprotein reductase] + H2O + 2 H(+). The catalysed reaction is 3beta-hydroxyandrost-5-en-17-one + reduced [NADPH--hemoprotein reductase] + O2 = 3beta,16alpha-dihydroxy-androst-5-en-17-one + oxidized [NADPH--hemoprotein reductase] + H2O + H(+). It carries out the reaction androst-4-ene-3,17-dione + reduced [NADPH--hemoprotein reductase] + O2 = 16alpha-hydroxyandrost-4-ene-3,17-dione + oxidized [NADPH--hemoprotein reductase] + H2O + H(+). The protein operates within steroid hormone biosynthesis. Its pathway is steroid biosynthesis; glucocorticoid biosynthesis. Regulated predominantly by intracellular cAMP levels. The 17,20-lyase activity is stimulated by cytochrome b5, which acts as an allosteric effector increasing the Vmax of the lyase activity. Its function is as follows. A cytochrome P450 monooxygenase involved in corticoid and androgen biosynthesis. Catalyzes 17-alpha hydroxylation of C21 steroids, which is common for both pathways. A second oxidative step, required only for androgen synthesis, involves an acyl-carbon cleavage. The 17-alpha hydroxy intermediates, as part of adrenal glucocorticoids biosynthesis pathway, are precursors of cortisol. Hydroxylates steroid hormones, pregnenolone and progesterone to form 17-alpha hydroxy metabolites, followed by the cleavage of the C17-C20 bond to form C19 steroids, dehydroepiandrosterone (DHEA) and androstenedione. Has 16-alpha hydroxylase activity. Catalyzes 16-alpha hydroxylation of 17-alpha hydroxy pregnenolone, followed by the cleavage of the C17-C20 bond to form 16-alpha-hydroxy DHEA. Also 16-alpha hydroxylates androgens, relevant for estriol synthesis. Mechanistically, uses molecular oxygen inserting one oxygen atom into a substrate, and reducing the second into a water molecule, with two electrons provided by NADPH via cytochrome P450 reductase (CPR; NADPH-ferrihemoprotein reductase). This is Steroid 17-alpha-hydroxylase/17,20 lyase (CYP17A1) from Macaca fascicularis (Crab-eating macaque).